Here is a 459-residue protein sequence, read N- to C-terminus: Glycosyl hydrolase family 109 protein 1 (459 aa).

Residues methionine 1 to alanine 31 constitute a signal peptide (tat-type signal). NAD(+) contacts are provided by residues glutamate 64–arginine 65, aspartate 86, tryptophan 135–histidine 138, glutamate 155–valine 156, and asparagine 184. Substrate-binding positions include tyrosine 213, arginine 232, tyrosine 244–histidine 247, and tyrosine 326. Position 244 (tyrosine 244) interacts with NAD(+).

It belongs to the Gfo/Idh/MocA family. Glycosyl hydrolase 109 subfamily. Requires NAD(+) as cofactor. Predicted to be exported by the Tat system. The position of the signal peptide cleavage has not been experimentally proven.

Glycosidase. This is Glycosyl hydrolase family 109 protein 1 from Shewanella sp. (strain ANA-3).